Consider the following 156-residue polypeptide: 6,7-dimethyl-8-ribityllumazine synthase (156 aa).

5-amino-6-(D-ribitylamino)uracil is bound by residues Phe-23, 57 to 59 (AFE), and 81 to 83 (AVI). 86 to 87 (ST) provides a ligand contact to (2S)-2-hydroxy-3-oxobutyl phosphate. Residue His-89 is the Proton donor of the active site. Residue Phe-114 coordinates 5-amino-6-(D-ribitylamino)uracil. Residue Arg-128 participates in (2S)-2-hydroxy-3-oxobutyl phosphate binding.

Belongs to the DMRL synthase family.

The enzyme catalyses (2S)-2-hydroxy-3-oxobutyl phosphate + 5-amino-6-(D-ribitylamino)uracil = 6,7-dimethyl-8-(1-D-ribityl)lumazine + phosphate + 2 H2O + H(+). It participates in cofactor biosynthesis; riboflavin biosynthesis; riboflavin from 2-hydroxy-3-oxobutyl phosphate and 5-amino-6-(D-ribitylamino)uracil: step 1/2. Its function is as follows. Catalyzes the formation of 6,7-dimethyl-8-ribityllumazine by condensation of 5-amino-6-(D-ribitylamino)uracil with 3,4-dihydroxy-2-butanone 4-phosphate. This is the penultimate step in the biosynthesis of riboflavin. This chain is 6,7-dimethyl-8-ribityllumazine synthase, found in Sulfurospirillum multivorans (Dehalospirillum multivorans).